The primary structure comprises 706 residues: Glycylpeptide N-tetradecanoyltransferase (706 aa).

Positions 1-119 (MSGIAGTSQD…LASGSSREGK (119 aa)) are disordered. A compositionally biased stretch (low complexity) spans 7-42 (TSQDTSVAASASSSSTRPAAASSSIAPPSPSLTTAP). A compositionally biased stretch (acidic residues) spans 47 to 65 (EQDDDDDQENDDEEEEEEG). Over residues 78–95 (KQRKKKKSKAAAKLRKKL) the composition is skewed to basic residues. Tetradecanoyl-CoA is bound by residues 180-183 (HKFW), 317-319 (LCV), and 325-329 (SKRLA). The active-site Proton acceptor; via carboxylate is Val706.

This sequence belongs to the NMT family. Monomer.

It localises to the cytoplasm. The enzyme catalyses N-terminal glycyl-[protein] + tetradecanoyl-CoA = N-tetradecanoylglycyl-[protein] + CoA + H(+). Functionally, adds a myristoyl group to the N-terminal glycine residue of certain cellular proteins. In Mycosarcoma maydis (Corn smut fungus), this protein is Glycylpeptide N-tetradecanoyltransferase (NMT1).